Reading from the N-terminus, the 759-residue chain is MAGLTLFVGRLPPSARSEQLEELFSQVGPVKQCFVVTEKGSKACRGFGYVTFSMLEDVQRALKEITTFEGCKINVTVAKKKLRNKTKEKGKNENSECPKKEPKAKKAKVADKKARLIIRNLSFKCSEDDLKTVFAQFGAVLEVNIPRKPDGKMRGFGFVQFKNLLEAGKALKGMNMKEIKGRTVAVDWAVAKDKYKDTQSVSAIGEEKSHESKHQESVKKKGREEEDMEEEENDDDDDDDDEEDGVFDDEDEEEENIESKVTKPVQIQKRAVKRPAPAKSSDHSEEDSDLEESDSIDDGEELAQSDTSTEEQEDKAVQVSNKKKRKLPSDVNEGKTVFIRNLSFDSEEEELGELLQQFGELKYVRIVLHPDTEHSKGCAFAQFMTQEAAQKCLLAASPENEAGGLKLDGRQLKVDLAVTRDEAAKLQTTKVKKPTGTRNLYLAREGLIRAGTKAAEGVSAADMAKRERFELLKHQKLKDQNIFVSRTRLCLHNLPKAVDDKQLRKLLLSATSGEKGVRIKECRVMRDLKGVHGNMKGQSLGYAFAEFQEHEHALKALRLINNNPEIFGPLKRPIVEFSLEDRRKLKMKELRIQRSLQKMRSKPATGEPQKGQPEPAKDQQQKAAQHHTEEQSKVPPEQKRKAGSTSWTGFQTKAEVEQVELPDGKKRRKVLALPSHRGPKIRLRDKGKVKPVHPKKPKPQINQWKQEKQQLSSEQVSRKKAKGNKTETRFNQLVEQYKQKLLGPSKGAPLAKRSKWFDS.

An N-acetylalanine modification is found at Ala-2. In terms of domain architecture, RRM 1 spans Leu-4 to Lys-80. The disordered stretch occupies residues Asn-84–Lys-105. A compositionally biased stretch (basic and acidic residues) spans Lys-85–Glu-101. Positions Ala-114 to Ala-191 constitute an RRM 2 domain. Ser-122 carries the phosphoserine modification. Residues Val-201–Asp-330 form a disordered region. The segment covering Gly-205–Glu-224 has biased composition (basic and acidic residues). Acidic residues-rich tracts occupy residues Glu-225–Asn-256 and Ser-284–Glu-313. 2 consecutive RRM domains span residues Lys-335–Thr-419 and Thr-487–Gln-597. Ser-397 is modified (phosphoserine). Positions Arg-594–Ser-759 are disordered. A compositionally biased stretch (basic and acidic residues) spans Pro-615–Arg-640. A Glycyl lysine isopeptide (Lys-Gly) (interchain with G-Cter in SUMO2) cross-link involves residue Lys-653. Positions Val-689–Lys-698 are enriched in basic residues. Polar residues predominate over residues Gln-700–Gln-715.

Interacts with U1, U2, U4, U5, and U6 spliceosomal small nuclear RNAs (snRNAs). As to expression, ubiquitously expressed.

Its subcellular location is the nucleus. The protein localises to the nucleolus. Its function is as follows. Nucleolar component of the spliceosomal ribonucleoprotein complexes. The protein is RNA-binding protein 28 (RBM28) of Homo sapiens (Human).